The primary structure comprises 143 residues: Transcription antitermination protein NusB (143 aa).

The protein belongs to the NusB family.

Involved in transcription antitermination. Required for transcription of ribosomal RNA (rRNA) genes. Binds specifically to the boxA antiterminator sequence of the ribosomal RNA (rrn) operons. This Streptomyces griseus subsp. griseus (strain JCM 4626 / CBS 651.72 / NBRC 13350 / KCC S-0626 / ISP 5235) protein is Transcription antitermination protein NusB.